Here is a 188-residue protein sequence, read N- to C-terminus: Elongation factor P-like protein (188 aa).

This sequence belongs to the elongation factor P family.

This Xanthomonas euvesicatoria pv. vesicatoria (strain 85-10) (Xanthomonas campestris pv. vesicatoria) protein is Elongation factor P-like protein.